Reading from the N-terminus, the 286-residue chain is Large ribosomal subunit protein uL3 (286 aa).

An N5-methylglutamine modification is found at Gln152. The segment covering 246–265 (EAAAAAAAAEEQAAMEAAEA) has biased composition (low complexity). The interval 246–286 (EAAAAAAAAEEQAAMEAAEAAEAKTDTVAEAEAAEKKEGDA) is disordered. Positions 266-286 (AEAKTDTVAEAEAAEKKEGDA) are enriched in basic and acidic residues.

The protein belongs to the universal ribosomal protein uL3 family. Part of the 50S ribosomal subunit. Forms a cluster with proteins L14 and L19. In terms of processing, methylated by PrmB.

Functionally, one of the primary rRNA binding proteins, it binds directly near the 3'-end of the 23S rRNA, where it nucleates assembly of the 50S subunit. This is Large ribosomal subunit protein uL3 from Roseobacter denitrificans (strain ATCC 33942 / OCh 114) (Erythrobacter sp. (strain OCh 114)).